The primary structure comprises 202 residues: Putative pituitary tumor-transforming gene 3 protein (202 aa).

The D-box signature appears at arginine 61–leucine 64. Positions valine 67–lysine 92 are disordered. The SH3-binding signature appears at proline 163–proline 173.

The protein belongs to the securin family.

It localises to the cytoplasm. Its subcellular location is the nucleus. In Pongo pygmaeus (Bornean orangutan), this protein is Putative pituitary tumor-transforming gene 3 protein (PTTG3).